We begin with the raw amino-acid sequence, 588 residues long: Aspartate--tRNA ligase (588 aa).

Residue E172 participates in L-aspartate binding. Residues Q196–K199 are aspartate. R218 provides a ligand contact to L-aspartate. ATP is bound by residues R218 to E220 and Q227. H449 lines the L-aspartate pocket. Residue E483 participates in ATP binding. R490 provides a ligand contact to L-aspartate. Residue G535–R538 participates in ATP binding.

This sequence belongs to the class-II aminoacyl-tRNA synthetase family. Type 1 subfamily. Homodimer.

The protein resides in the cytoplasm. It carries out the reaction tRNA(Asp) + L-aspartate + ATP = L-aspartyl-tRNA(Asp) + AMP + diphosphate. Functionally, catalyzes the attachment of L-aspartate to tRNA(Asp) in a two-step reaction: L-aspartate is first activated by ATP to form Asp-AMP and then transferred to the acceptor end of tRNA(Asp). The chain is Aspartate--tRNA ligase from Haemophilus influenzae (strain PittGG).